Consider the following 255-residue polypeptide: Probable transcriptional regulatory protein Rcas_0718 (255 aa).

Belongs to the TACO1 family.

It is found in the cytoplasm. This chain is Probable transcriptional regulatory protein Rcas_0718, found in Roseiflexus castenholzii (strain DSM 13941 / HLO8).